The sequence spans 321 residues: Inner membrane protein YtfF (321 aa).

Residues 1 to 4 are Cytoplasmic-facing; that stretch reads MISG. The helical transmembrane segment at 5 to 25 threads the bilayer; the sequence is VLYALLAGLMWGLIFVGPLIV. An EamA domain is found at 13–141; it reads LMWGLIFVGP…IGIGLACVNI (129 aa). The Periplasmic portion of the chain corresponds to 26-30; the sequence is PEYPA. A helical transmembrane segment spans residues 31–51; that stretch reads MLQSMGRYLALGLIALPIAWL. Over 52 to 65 the chain is Cytoplasmic; that stretch reads GRVRLRQLARRDWL. Residues 66–86 traverse the membrane as a helical segment; that stretch reads TALMLTMMGNLIYYFCLASAI. Over 87 to 92 the chain is Periplasmic; sequence QRTGAP. A helical transmembrane segment spans residues 93–113; it reads VSTMIIGTLPVVIPVFANLLY. Residues 114 to 120 lie on the Cytoplasmic side of the membrane; that stretch reads SQRDGKL. The chain crosses the membrane as a helical span at residues 121-141; the sequence is AWGKLAPALICIGIGLACVNI. Residues 142 to 154 lie on the Periplasmic side of the membrane; sequence AELNHGLPDFDWA. The helical transmembrane segment at 155 to 175 threads the bilayer; the sequence is RYTSGIVLALVSVVCWAWYAL. Residues 176–194 are Cytoplasmic-facing; it reads RNARWLRENPDKHPMMWAT. Residues 195 to 215 form a helical membrane-spanning segment; it reads AQALVTLPVSLIGYLVACYWL. The Periplasmic portion of the chain corresponds to 216 to 230; it reads NTQTPDFSLPFGPRP. The helical transmembrane segment at 231–251 threads the bilayer; that stretch reads LVFISLMVAIAVLCSWVGALC. Residues 252-261 are Cytoplasmic-facing; sequence WNVASQLLPT. Residues 262–282 form a helical membrane-spanning segment; that stretch reads VILGPLIVFETLAGLLYTFLL. Topologically, residues 283–285 are periplasmic; that stretch reads RQQ. Residues 286–306 traverse the membrane as a helical segment; sequence MPPLMTLSGIALLVIGVVIAV. At 307-321 the chain is on the cytoplasmic side; it reads RAKPEKPLTESVSES.

The protein localises to the cell inner membrane. The polypeptide is Inner membrane protein YtfF (ytfF) (Escherichia coli (strain K12)).